A 2194-amino-acid chain; its full sequence is Glutamate synthase [NADH], amyloplastic (2194 aa).

The transit peptide at 1 to 101 directs the protein to the amyloplast; it reads MSNSLSLTFT…LYDPAFDKDS (101 aa). C102 (nucleophile) is an active-site residue. The 402-residue stretch at 102–503 folds into the Glutamine amidotransferase type-2 domain; sequence CGVGFVAELN…PGMMLLVDFE (402 aa). The disordered stretch occupies residues 1021 to 1045; sequence GGKSNTGEGGEQPSRMEPLADGSRN. Residue 1193 to 1250 participates in FMN binding; the sequence is LAETHQTLVANDLRGRTTLQTDGQLKTGRDVAIAALLGAEEYGFSTAPLITLGCIMMR. Residues C1246, C1252, and C1257 each coordinate [3Fe-4S] cluster. 1974 to 1988 provides a ligand contact to NAD(+); the sequence is GGGDTGTDCIGTSIR.

It belongs to the glutamate synthase family. Monomer. [3Fe-4S] cluster is required as a cofactor. FAD serves as cofactor. Requires FMN as cofactor. As to expression, expressed in infected cells in root nodules. Barely detected in roots and stems.

The protein localises to the plastid. It is found in the amyloplast. It catalyses the reaction 2 L-glutamate + NAD(+) = L-glutamine + 2-oxoglutarate + NADH + H(+). Its pathway is amino-acid biosynthesis; L-glutamate biosynthesis via GLT pathway; L-glutamate from 2-oxoglutarate and L-glutamine (NAD(+) route): step 1/1. The protein operates within energy metabolism; nitrogen metabolism. Its activity is regulated as follows. Inhibited by malate, citrate, glutamate, NAD(+) and azaserine, but not by 2-2' dipyridil and N-ethylmaleimide. Functionally, required for the assimilation of symbiotically fixed nitrogen into amino acids in root nodules. This Medicago sativa (Alfalfa) protein is Glutamate synthase [NADH], amyloplastic.